A 312-amino-acid polypeptide reads, in one-letter code: Salivary protein SG34 (312 aa).

An N-terminal signal peptide occupies residues 1-20 (MSPSKKILVLLLFPILLVSS). The stretch at 95–158 (NMEVQLLRES…QEEIEEQTKQ (64 aa)) forms a coiled coil.

It belongs to the salivary protein SG34 family. Female salivary gland (at protein level). Low-level expression in ovary.

Functionally, possible serine protease. (Microbial infection) Modulates replication of duck Tembusu virus in salivary glands and virus release into the saliva, probably via the regulation of antimicrobial peptides expression in response to virus infection. Its function is as follows. (Microbial infection) Enhances replication of dengue virus type 2 in human keratinocytes, probably by suppressing the production of type I interferons and antimicrobial peptides in response to virus infection. This is Salivary protein SG34 from Aedes aegypti (Yellowfever mosquito).